Here is a 167-residue protein sequence, read N- to C-terminus: E1B protein, small T-antigen (167 aa).

The segment at 143 to 167 (GLDPVQEEEEEEENLRAGLDPSTEL) is disordered.

The protein belongs to the adenoviridae E1B 19 kDa protein family.

Its subcellular location is the host cell membrane. It localises to the host nucleus envelope. The protein resides in the host nucleus lamina. Functionally, putative adenovirus Bcl-2 homolog that inhibits apoptosis induced by TNF or FAS pathways, as well as p53-mediated apoptosis. Without E1B 19K function, virus production is compromised because of premature death of host cell. Interacts with Bax protein in cell lysates. The sequence is that of E1B protein, small T-antigen from Human adenovirus F serotype 40 (HAdV-40).